A 295-amino-acid polypeptide reads, in one-letter code: Acetylglutamate kinase (295 aa).

Substrate is bound by residues 66 to 67 (GG), R88, and N193.

The protein belongs to the acetylglutamate kinase family. ArgB subfamily.

It localises to the cytoplasm. It catalyses the reaction N-acetyl-L-glutamate + ATP = N-acetyl-L-glutamyl 5-phosphate + ADP. Its pathway is amino-acid biosynthesis; L-arginine biosynthesis; N(2)-acetyl-L-ornithine from L-glutamate: step 2/4. In terms of biological role, catalyzes the ATP-dependent phosphorylation of N-acetyl-L-glutamate. In Sinorhizobium fredii (strain NBRC 101917 / NGR234), this protein is Acetylglutamate kinase.